Consider the following 1335-residue polypeptide: Restriction of telomere capping protein 1 (1335 aa).

Residues M1–S39 form a disordered region. 6 WD repeats span residues N207–N248, E256–S296, T305–A342, A367–E406, N439–H486, and L489–E527. Disordered regions lie at residues P559–I593, T600–F619, A630–E651, K736–D758, and N783–R824. Residues A630–T644 show a composition bias toward low complexity. Positions S808 to R817 are enriched in low complexity. Residues L844 to S884 form a WD 7 repeat. Disordered regions lie at residues A935–E956 and D1007–P1037. Composition is skewed to basic and acidic residues over residues D945–E956 and H1009–P1021. Residues S1030, S1074, S1081, S1083, S1117, and S1127 each carry the phosphoserine modification. 2 WD repeats span residues R1130–G1170 and V1217–L1256. Residues L1294 to I1335 form an RING-type; degenerate zinc finger.

The protein belongs to the WD repeat RTC1 family.

Its subcellular location is the vacuole. Functionally, may be involved in a process influencing telomere capping. This chain is Restriction of telomere capping protein 1 (RTC1), found in Saccharomyces cerevisiae (strain YJM789) (Baker's yeast).